Here is a 410-residue protein sequence, read N- to C-terminus: Probable intron-encoded endonuclease bI1 (410 aa).

Residues 1 to 131 (MRLLKTHPIL…VLMMAIAFLG (131 aa)) form a COB exon 1 encoded region. Helical transmembrane passes span 32-52 (FGSLLGVCLIIQILTGVFLAM), 75-95 (GWLIRYLHANTASFFFIFVYL), and 112-132 (LLWSIGVIILVLMMAIAFLGF). Residues 132–410 (FNGQKYMCFY…KKNYIVKVIK (279 aa)) are COB intron 1 encoded. In terms of domain architecture, GIY-YIG spans 196-286 (PFSGIYMIVN…LETLKPEYNI (91 aa)).

It to endonucleases of group I introns of fungi and phage. In terms of processing, the mature protein may arise from proteolytic cleavage of an in-frame translation of COB exon 1 plus intron 1, containing the bI1 open reading frame.

The protein localises to the mitochondrion. It is found in the membrane. Mitochondrial DNA endonuclease involved in intron homing. The protein is Probable intron-encoded endonuclease bI1 (bI1) of Mycosarcoma maydis (Corn smut fungus).